We begin with the raw amino-acid sequence, 163 residues long: Large ribosomal subunit protein bL17 (163 aa).

Residues 127–163 form a disordered region; the sequence is KEVKKAKSRRGGKAKKAEGTAPEAPAAESESTTEASE. The segment covering 128–140 has biased composition (basic residues); it reads EVKKAKSRRGGKA. A compositionally biased stretch (low complexity) spans 145 to 163; the sequence is GTAPEAPAAESESTTEASE.

It belongs to the bacterial ribosomal protein bL17 family. As to quaternary structure, part of the 50S ribosomal subunit. Contacts protein L32.

This Flavobacterium johnsoniae (strain ATCC 17061 / DSM 2064 / JCM 8514 / BCRC 14874 / CCUG 350202 / NBRC 14942 / NCIMB 11054 / UW101) (Cytophaga johnsonae) protein is Large ribosomal subunit protein bL17.